The following is a 39-amino-acid chain: SGSKTAEIDDGCFGLPLDPIGSTSGMGCRSVPKPIPGGS.

Positions S1–I8 are excised as a propeptide. The interval S1–S39 is disordered. Residues C12 and C28 are joined by a disulfide bond.

This sequence belongs to the natriuretic peptide family. Expressed by the venom gland.

The protein resides in the secreted. Functionally, snake venom natriuretic peptide that targets both NPR1 and NPR2. Exhibits hypotensive and vasodepressor activities. This Pseudechis australis (Mulga snake) protein is Natriuretic peptide PaNP-d.